Here is a 335-residue protein sequence, read N- to C-terminus: tRNA methyltransferase 10 homolog A (335 aa).

2 disordered regions span residues 1 to 91 (MSSE…DRKR) and 279 to 335 (VPAH…PDPQ). A phosphoserine mark is found at Ser22 and Ser24. Residues 52–62 (RLWEEQREQRK) are compositionally biased toward basic and acidic residues. A coiled-coil region spans residues 52 to 84 (RLWEEQREQRKEKRKEKRKRKKLERRCQLESNS). Residues 63-75 (EKRKEKRKRKKLE) are compositionally biased toward basic residues. The SAM-dependent MTase TRM10-type domain occupies 88–279 (DRKRIRRHVA…TILPPRKGAV (192 aa)). Residues 304–319 (EGEHGRDDPGSPHKEQ) are compositionally biased toward basic and acidic residues. Residues 320-335 (QGQQSSSVSAVSPDPQ) show a composition bias toward low complexity. Ser331 bears the Phosphoserine mark.

This sequence belongs to the class IV-like SAM-binding methyltransferase superfamily. TRM10 family. In terms of assembly, interacts with tRNA. Ubiquitously expressed. Is more abundant in brain and pancreatic islets compared to other tissues (at protein level).

It is found in the nucleus. It localises to the nucleolus. It catalyses the reaction guanosine(9) in tRNA + S-adenosyl-L-methionine = N(1)-methylguanosine(9) in tRNA + S-adenosyl-L-homocysteine + H(+). Its function is as follows. S-adenosyl-L-methionine-dependent guanine N(1)-methyltransferase that catalyzes the formation of N(1)-methylguanine at position 9 (m1G9) in tRNAs. Probably not able to catalyze formation of N(1)-methyladenine at position 9 (m1A9) in tRNAs. The protein is tRNA methyltransferase 10 homolog A (Trmt10a) of Rattus norvegicus (Rat).